The following is a 279-amino-acid chain: Putative F-box protein At1g50880 (279 aa).

One can recognise an F-box domain in the interval 19–69 (SSSMSSIPLDVTSKILAKLPAKSVLRARCVSKQWSSISTDPYFISNMFPKQ).

The chain is Putative F-box protein At1g50880 from Arabidopsis thaliana (Mouse-ear cress).